The following is a 658-amino-acid chain: MTQLAIGEATPHGATYDGHGVNFTLFSAHAERVELCVFDSRGNERRYDLPGRRGDVWHGYLAGARPGLRYGYRVHGPWQPAQGHRFNPAKLLLDPYARRVEGELKDHPLLHGGHDEPDYRDNAAVAPKSVIISDHYDWEDDAAPRTPWGKTVIYEAHVKGLTYLHPELPQEIRGTYKALGHPVMVAYFKQLGITALELLPVAQFASEPRLQRMGLTNYWGYNPMAMFALHPAWASSPETALDEFRDAVKALHRAGIEVILDIVLNHSAELDLDGPTFSLRGIDNRSYYWIRDDGDYHNWTGCGNTLNLSHPGVVEYACECLRYWVETCHVDGFRFDLASVMGRTPTFRQDAPLFAAIKACPVLSTVKLIAEPWDIGEGGYQVGNFPPPFAEWNDHFRDAARRFWLPRNLTTGEFACRFAASSDVFKRNGRTPGASVNLLTAHDGFTLRDCVCFNQKHNEANGEENRDGTNSNYSDNHGKEGLGGPLDLMERRRDSIHALLATLLLSQGTPMLLAGDEHGHSQHGNNNAYCQDNALTWLDWQQANRGLTTFTAALIRLRQQIPALTGNSWWEEGDGNVRWLNKNAQPLSADEWQNGPKLMQILLSDRFLIAINATLEVTDIVLPEGEWRAVPPFAGEDNPVITAVWQGPAHGLCVFQRG.

Asp-336 acts as the Nucleophile in catalysis. Glu-371 functions as the Proton donor in the catalytic mechanism. A disordered region spans residues 459–483 (EANGEENRDGTNSNYSDNHGKEGLG).

It belongs to the glycosyl hydrolase 13 family.

It catalyses the reaction Hydrolysis of (1-&gt;6)-alpha-D-glucosidic linkages to branches with degrees of polymerization of three or four glucose residues in limit dextrin.. It participates in glycan degradation; glycogen degradation. In terms of biological role, removes maltotriose and maltotetraose chains that are attached by 1,6-alpha-linkage to the limit dextrin main chain, generating a debranched limit dextrin. The polypeptide is Glycogen debranching enzyme (Salmonella agona (strain SL483)).